The chain runs to 173 residues: ATP synthase subunit beta, mitochondrial (173 aa).

It belongs to the ATPase alpha/beta chains family. In terms of assembly, F-type ATPases have 2 components, CF(1) - the catalytic core - and CF(0) - the membrane proton channel. CF(1) has five subunits: alpha(3), beta(3), gamma(1), delta(1), epsilon(1). CF(0) has three main subunits: a, b and c.

It is found in the mitochondrion. The protein localises to the mitochondrion inner membrane. It carries out the reaction ATP + H2O + 4 H(+)(in) = ADP + phosphate + 5 H(+)(out). Its function is as follows. Mitochondrial membrane ATP synthase (F(1)F(0) ATP synthase or Complex V) produces ATP from ADP in the presence of a proton gradient across the membrane which is generated by electron transport complexes of the respiratory chain. F-type ATPases consist of two structural domains, F(1) - containing the extramembraneous catalytic core and F(0) - containing the membrane proton channel, linked together by a central stalk and a peripheral stalk. During catalysis, ATP synthesis in the catalytic domain of F(1) is coupled via a rotary mechanism of the central stalk subunits to proton translocation. Subunits alpha and beta form the catalytic core in F(1). Rotation of the central stalk against the surrounding alpha(3)beta(3) subunits leads to hydrolysis of ATP in three separate catalytic sites on the beta subunits. This chain is ATP synthase subunit beta, mitochondrial (ATPB), found in Actinidia deliciosa (Kiwi).